Here is a 341-residue protein sequence, read N- to C-terminus: L-threonine 3-dehydrogenase (341 aa).

Position 38 (Cys-38) interacts with Zn(2+). Residues Thr-40 and His-43 each act as charge relay system in the active site. Residues His-63, Glu-64, Cys-93, Cys-96, Cys-99, and Cys-107 each contribute to the Zn(2+) site. NAD(+)-binding positions include Ile-175, Asp-195, Arg-200, 262–264 (LGI), and 286–287 (IY).

It belongs to the zinc-containing alcohol dehydrogenase family. As to quaternary structure, homotetramer. Zn(2+) is required as a cofactor.

The protein localises to the cytoplasm. The enzyme catalyses L-threonine + NAD(+) = (2S)-2-amino-3-oxobutanoate + NADH + H(+). It functions in the pathway amino-acid degradation; L-threonine degradation via oxydo-reductase pathway; glycine from L-threonine: step 1/2. Its function is as follows. Catalyzes the NAD(+)-dependent oxidation of L-threonine to 2-amino-3-ketobutyrate. This chain is L-threonine 3-dehydrogenase, found in Proteus mirabilis (strain HI4320).